A 436-amino-acid chain; its full sequence is MSIEVNWGTATSGPDGEALAERIRSFIHDKFQQVPLPRFIRSVQVHSFDFGTVAPDLEIKDFCEPFADFYEDDEDGDSGSEISEELQHRTHDNPWDRTQSELNETSFRDDRPVTSHHALRDPFDEDFRQHTSSPLRSPIALGDHLNPHFLPRAGTPGIPGGTSTLGYHLMSLGGLSGTQTPLAAVAGGSPFTTNWTDPSPMGQGNKTGIRPSPLHRADADIDSSNPASRPSTASTHPSGSNRSSHPDGHPEHNDDPISSSENPLLQNQPPPRMRERRPEDFQILCHVKYAGDIRLSLTAEILLDYPMPSFVGLPLKLNVTGITFDGVAVIAYIRKRVHFCFLSPEDAEALVGSGSYSGQQETPGPSTGSSGGGNPSPHQKGLSLLQEIRVESEIGRKEDGKQVLKNVGKVERFVLAQVRRIFDEELVFPSFYTFLI.

Residues 1–436 enclose the SMP-LTD domain; the sequence is MSIEVNWGTA…VFPSFYTFLI (436 aa). A compositionally biased stretch (acidic residues) spans 73 to 84; it reads DEDGDSGSEISE. Disordered stretches follow at residues 73 to 98, 184 to 275, and 352 to 380; these read DEDG…WDRT, AVAG…RMRE, and GSGS…PHQK. The segment covering 85 to 98 has biased composition (basic and acidic residues); it reads ELQHRTHDNPWDRT. Polar residues-rich tracts occupy residues 190–206 and 222–243; these read PFTT…QGNK and DSSN…SNRS. Basic and acidic residues predominate over residues 244–255; the sequence is SHPDGHPEHNDD. Residues 256-267 are compositionally biased toward polar residues; it reads PISSSENPLLQN.

It belongs to the MDM12 family. As to quaternary structure, component of the ER-mitochondria encounter structure (ERMES) or MDM complex, composed of mmm1, mdm10, mdm12 and mdm34. A mmm1 homodimer associates with one molecule of mdm12 on each side in a pairwise head-to-tail manner, and the SMP-LTD domains of mmm1 and mdm12 generate a continuous hydrophobic tunnel for phospholipid trafficking.

The protein resides in the mitochondrion outer membrane. The protein localises to the endoplasmic reticulum membrane. Functionally, component of the ERMES/MDM complex, which serves as a molecular tether to connect the endoplasmic reticulum (ER) and mitochondria. Components of this complex are involved in the control of mitochondrial shape and protein biogenesis, and function in nonvesicular lipid trafficking between the ER and mitochondria. Mdm12 is required for the interaction of the ER-resident membrane protein mmm1 and the outer mitochondrial membrane-resident beta-barrel protein mdm10. The mdm12-mmm1 subcomplex functions in the major beta-barrel assembly pathway that is responsible for biogenesis of all mitochondrial outer membrane beta-barrel proteins, and acts in a late step after the SAM complex. The mdm10-mdm12-mmm1 subcomplex further acts in the TOM40-specific pathway after the action of the mdm12-mmm1 complex. Essential for establishing and maintaining the structure of mitochondria and maintenance of mtDNA nucleoids. The sequence is that of Mitochondrial distribution and morphology protein 12 from Emericella nidulans (strain FGSC A4 / ATCC 38163 / CBS 112.46 / NRRL 194 / M139) (Aspergillus nidulans).